A 202-amino-acid chain; its full sequence is NADH-quinone oxidoreductase subunit C (202 aa).

Belongs to the complex I 30 kDa subunit family. As to quaternary structure, NDH-1 is composed of 14 different subunits. Subunits NuoB, C, D, E, F, and G constitute the peripheral sector of the complex.

It localises to the cell inner membrane. It carries out the reaction a quinone + NADH + 5 H(+)(in) = a quinol + NAD(+) + 4 H(+)(out). Its function is as follows. NDH-1 shuttles electrons from NADH, via FMN and iron-sulfur (Fe-S) centers, to quinones in the respiratory chain. The immediate electron acceptor for the enzyme in this species is believed to be ubiquinone. Couples the redox reaction to proton translocation (for every two electrons transferred, four hydrogen ions are translocated across the cytoplasmic membrane), and thus conserves the redox energy in a proton gradient. This is NADH-quinone oxidoreductase subunit C from Bartonella quintana (strain Toulouse) (Rochalimaea quintana).